The sequence spans 227 residues: Large ribosomal subunit protein bL25 (227 aa).

Belongs to the bacterial ribosomal protein bL25 family. CTC subfamily. Part of the 50S ribosomal subunit; part of the 5S rRNA/L5/L18/L25 subcomplex. Contacts the 5S rRNA. Binds to the 5S rRNA independently of L5 and L18.

Functionally, this is one of the proteins that binds to the 5S RNA in the ribosome where it forms part of the central protuberance. This Polaromonas sp. (strain JS666 / ATCC BAA-500) protein is Large ribosomal subunit protein bL25.